A 701-amino-acid polypeptide reads, in one-letter code: Elongation factor G (701 aa).

Residues 11–287 (TKVRNIGIMA…AVIDYLPSPL (277 aa)) form the tr-type G domain. Residues 20–27 (AHIDAGKT), 84–88 (DTPGH), and 138–141 (NKMD) each bind GTP.

The protein belongs to the TRAFAC class translation factor GTPase superfamily. Classic translation factor GTPase family. EF-G/EF-2 subfamily.

The protein resides in the cytoplasm. Catalyzes the GTP-dependent ribosomal translocation step during translation elongation. During this step, the ribosome changes from the pre-translocational (PRE) to the post-translocational (POST) state as the newly formed A-site-bound peptidyl-tRNA and P-site-bound deacylated tRNA move to the P and E sites, respectively. Catalyzes the coordinated movement of the two tRNA molecules, the mRNA and conformational changes in the ribosome. This Mycobacterium marinum (strain ATCC BAA-535 / M) protein is Elongation factor G.